The primary structure comprises 614 residues: Sodium- and chloride-dependent betaine transporter (614 aa).

Residues 1–44 (MDGKVAVQECGPPAVSWVPEEGEKLDQEDEDQVKDRGQWTNKME) are Cytoplasmic-facing. A run of 3 helical transmembrane segments spans residues 45–65 (FVLSVAGEIIGLGNVWRFPYL), 73–92 (AFFIPYFIFFFVCGIPVFFL), and 117–137 (GIGLASVVIESYLNVYYIIIL). Residues 138 to 210 (AWALFYLFSS…SGIHDLGSLR (73 aa)) lie on the Extracellular side of the membrane. A disulfide bridge links C157 with C166. N171 and N183 each carry an N-linked (GlcNAc...) asparagine glycan. 9 helical membrane-spanning segments follow: residues 211–229 (WELALCLLLAWVICYFCIW), 238–255 (VVYFTATFPYLMLVILLI), 291–308 (IFFSFAICQGCLTALGSY), 320–341 (IALCFLNSATSFVAGFVVFSIL), 374–393 (MPLSQLWSCLFFIMLIFLGL), 423–441 (LLILTIAVMCYLIGLFLVT), 458–478 (GICLLFLSLFEVVCISWVYGA), 499–518 (ISWLFLTPGLCLATFLFSLS), and 538–556 (IGWFLALSSMVCVPLFVVI). At 557 to 614 (TLLKTRGPFRKRLRQLITPDSSLPQPKQHPCLDGSAGRNFGPSPTREGLIAGEKETHL) the chain is on the cytoplasmic side. Residues 576–614 (DSSLPQPKQHPCLDGSAGRNFGPSPTREGLIAGEKETHL) are disordered.

The protein belongs to the sodium:neurotransmitter symporter (SNF) (TC 2.A.22) family. SLC6A12 subfamily. Interacts with LIN7C. In terms of tissue distribution, expressed in kidney, liver, heart, skeletal muscle, placenta, and a widespread distribution in the brain.

Its subcellular location is the basolateral cell membrane. The protein localises to the cell membrane. The catalysed reaction is 4-aminobutanoate(out) + chloride(out) + 3 Na(+)(out) = 4-aminobutanoate(in) + chloride(in) + 3 Na(+)(in). It carries out the reaction glycine betaine(out) + 2 chloride(out) + 3 Na(+)(out) = glycine betaine(in) + 2 chloride(in) + 3 Na(+)(in). Its function is as follows. Transporter that mediates cellular uptake of betaine and GABA in a sodium- and chloride-dependent process. May have a role in regulation of GABAergic transmission in the brain through the reuptake of GABA into presynaptic terminals, as well as in osmotic regulation. Probably also involved in renal and hepatic osmotic regulation. The sequence is that of Sodium- and chloride-dependent betaine transporter from Homo sapiens (Human).